A 151-amino-acid polypeptide reads, in one-letter code: Troponin C, isoallergen Bla g 6.0101 (151 aa).

EF-hand domains are found at residues 7–42 (EQIQLLKKAFDAFDREKKGCISTEMVGTILEMLGHR), 43–78 (LDDDMLQEIIAEVDADGSGELEFEEFVSLASRFLVE), 83–118 (AMQQELREAFRLYDKEGNGYITTNVLREILKELDDK), and 119–151 (ITAEDLDMMIEEIDSDGSGTVDFDEFMEVMTGE). Residues Asp56, Asp58, Ser60, Glu62, and Glu67 each contribute to the Ca(2+) site. Ca(2+) is bound by residues Asp132, Asp134, Ser136, Thr138, and Glu143.

This sequence belongs to the troponin C family.

Its function is as follows. Troponin is the central regulatory protein of striated muscle contraction. It consists of three components: Troponin-I (Tn-I) which is the inhibitor of actomyosin ATPase, Troponin-T (Tn-T) which contains the binding site for tropomyosin and Troponin-C (Tn-C). The binding of calcium to Tn-C abolishes the inhibitory action of Tn on actin filaments. The polypeptide is Troponin C, isoallergen Bla g 6.0101 (Blattella germanica (German cockroach)).